We begin with the raw amino-acid sequence, 388 residues long: MHDYQLFTSESVSEGHPDKMADQISDALLDAIMREDLHARVACETLVKTGAVVLAGEISTTANIDIERIVRDTVNSIGYNHSDLGFDGETCAVINMIGKQSPEIAQGVDRMNPEDQGAGDQGLMFGYASNETEVLMPAPIEFAHRLMERQSELRRSGELKWLRPDAKAQVTLKYTNGTPSAIDAVVLSTQHDPDISQADLQEAVMENIIKHVLPADLLHAGTRYHINPTGKFVIGGPVGDAGITGRKIIVDTYGGMARHGGGAFSGKDPSKVDRSAAYAGRYVAKNIVAAGLAERCEVQISYAIGVAEPTSISVNTFGTAKVSAEVIIELIRTHFDLRPYGITHMLNLLQPMYQQTATYGHFGRPGSETAFTWEKTDKAEILRADANI.

Histidine 16 is a binding site for ATP. Position 18 (aspartate 18) interacts with Mg(2+). Glutamate 44 lines the K(+) pocket. 2 residues coordinate L-methionine: glutamate 57 and glutamine 100. The interval glutamine 100–arginine 110 is flexible loop. ATP-binding positions include aspartate 165 to lysine 167, lysine 231 to phenylalanine 232, aspartate 240, arginine 246 to lysine 247, alanine 263, and lysine 267. Residue aspartate 240 participates in L-methionine binding. Lysine 271 serves as a coordination point for L-methionine.

This sequence belongs to the AdoMet synthase family. As to quaternary structure, homotetramer; dimer of dimers. Mg(2+) is required as a cofactor. The cofactor is K(+).

It localises to the cytoplasm. The enzyme catalyses L-methionine + ATP + H2O = S-adenosyl-L-methionine + phosphate + diphosphate. Its pathway is amino-acid biosynthesis; S-adenosyl-L-methionine biosynthesis; S-adenosyl-L-methionine from L-methionine: step 1/1. In terms of biological role, catalyzes the formation of S-adenosylmethionine (AdoMet) from methionine and ATP. The overall synthetic reaction is composed of two sequential steps, AdoMet formation and the subsequent tripolyphosphate hydrolysis which occurs prior to release of AdoMet from the enzyme. The protein is S-adenosylmethionine synthase of Psychrobacter sp. (strain PRwf-1).